The chain runs to 592 residues: Monocopper oxidase-like protein SKS2 (592 aa).

A signal peptide spans 1-23 (MAATDFFFAFVFSFALIFGFSFA). 11 N-linked (GlcNAc...) asparagine glycosylation sites follow: Asn61, Asn110, Asn172, Asn203, Asn259, Asn280, Asn295, Asn344, Asn364, Asn433, and Asn447. His455 lines the Cu cation pocket. Residues Asn476 and Asn536 are each glycosylated (N-linked (GlcNAc...) asparagine). Ser564 carries GPI-anchor amidated serine lipidation. Residues 565–592 (ATKSMTNGQLILIFSMMMVLLSSFSSFC) constitute a propeptide, removed in mature form.

It belongs to the multicopper oxidase family. Cu cation serves as cofactor.

Its subcellular location is the cell membrane. The protein is Monocopper oxidase-like protein SKS2 (SKS2) of Arabidopsis thaliana (Mouse-ear cress).